The chain runs to 224 residues: 7-cyano-7-deazaguanine synthase (224 aa).

An ATP-binding site is contributed by 10–20 (LSGGLDSATVV). C189, C199, C202, and C205 together coordinate Zn(2+).

The protein belongs to the QueC family. The cofactor is Zn(2+).

It carries out the reaction 7-carboxy-7-deazaguanine + NH4(+) + ATP = 7-cyano-7-deazaguanine + ADP + phosphate + H2O + H(+). It functions in the pathway purine metabolism; 7-cyano-7-deazaguanine biosynthesis. Its function is as follows. Catalyzes the ATP-dependent conversion of 7-carboxy-7-deazaguanine (CDG) to 7-cyano-7-deazaguanine (preQ(0)). The protein is 7-cyano-7-deazaguanine synthase of Pseudomonas putida (strain W619).